A 514-amino-acid chain; its full sequence is MNIQEEIKKRRTFAIISHPDAGKTTITEQLLYFGGEIREAGTVKGKKTGTFAKSDWMDIEKQRGISVTSSVMQFDYDGKRVNILDTPGHEDFSEDTYRTLMAVDAAVMVVDSAKGIEAQTKKLFEVVKHRGIPVFTFMNKLDRDGREPLDLLQELEEILGIASYPMNWPIGMGKAFEGLYDLYNQRLELYKGDERFASLEDGDKLFGSNPFYEQVKDDIELLNEAGNEFSEEAILAGELTPVFFGSALTNFGVQTFLEIFLKFAPEPHGHKKTDGEIVDPYDKDFSGFVFKIQANMDPRHRDRIAFVRIVSGEFERGMSVNLPRTGKGAKLSNVTQFMAESRENVTNAVAGDIIGVYDTGTYQVGDTLTVGKNKFEFEPLPTFTPEIFMKVSAKNVMKQKSFHKGIEQLVQEGAVQLYKNYQTGEYMLGAVGQLQFEVFKHRMEGEYNAEVVMSPMGKKTVRWIKPEDLDERMSSSRNILAKDRFDQPVFLFENDFALRWFADKYPDVELEEKM.

The region spanning 8-268 (KKRRTFAIIS…IFLKFAPEPH (261 aa)) is the tr-type G domain. GTP contacts are provided by residues 17 to 24 (SHPDAGKT), 85 to 89 (DTPGH), and 139 to 142 (NKLD).

Belongs to the TRAFAC class translation factor GTPase superfamily. Classic translation factor GTPase family. PrfC subfamily.

It is found in the cytoplasm. Functionally, increases the formation of ribosomal termination complexes and stimulates activities of RF-1 and RF-2. It binds guanine nucleotides and has strong preference for UGA stop codons. It may interact directly with the ribosome. The stimulation of RF-1 and RF-2 is significantly reduced by GTP and GDP, but not by GMP. This Streptococcus pneumoniae (strain CGSP14) protein is Peptide chain release factor 3.